The sequence spans 872 residues: Alanine--tRNA ligase (872 aa).

Zn(2+) contacts are provided by His-563, His-567, Cys-665, and His-669.

It belongs to the class-II aminoacyl-tRNA synthetase family. Zn(2+) is required as a cofactor.

It localises to the cytoplasm. The enzyme catalyses tRNA(Ala) + L-alanine + ATP = L-alanyl-tRNA(Ala) + AMP + diphosphate. Functionally, catalyzes the attachment of alanine to tRNA(Ala) in a two-step reaction: alanine is first activated by ATP to form Ala-AMP and then transferred to the acceptor end of tRNA(Ala). Also edits incorrectly charged Ser-tRNA(Ala) and Gly-tRNA(Ala) via its editing domain. This is Alanine--tRNA ligase from Bacteroides fragilis (strain ATCC 25285 / DSM 2151 / CCUG 4856 / JCM 11019 / LMG 10263 / NCTC 9343 / Onslow / VPI 2553 / EN-2).